A 424-amino-acid polypeptide reads, in one-letter code: Ankyrin repeat domain-containing protein 61 (424 aa).

ANK repeat units follow at residues 80–109 (LSFL…DPEA), 113–169 (QGFT…ARVD), 172–201 (HRHC…QVNA), 205–234 (SSMT…SVNC), 239–278 (TGNT…QVNA), 282–311 (DGQA…NVNI), and 315–348 (NGES…PLRL).

This Bos taurus (Bovine) protein is Ankyrin repeat domain-containing protein 61 (ANKRD61).